The sequence spans 123 residues: Protein Rev (123 aa).

Residue serine 5 is modified to Phosphoserine; by host CK2. A homomultimerization region spans residues 18-26 (IIKTLYQSN). Disordered stretches follow at residues 24 to 50 (QSNP…ARQR) and 79 to 123 (EGLS…GTKE). The Nuclear localization signal and RNA-binding (RRE) signature appears at 34-50 (TRQARKNRRRRWRARQR). The segment covering 36–50 (QARKNRRRRWRARQR) has biased composition (basic residues). A Nuclear export signal and binding to XPO1 motif is present at residues 73-84 (FQLPPLEGLSLD). The residue at position 92 (serine 92) is a Phosphoserine; by host. Over residues 93–105 (GTQQPQGTETGVG) the composition is skewed to low complexity.

It belongs to the HIV-1 REV protein family. Homomultimer; when bound to the RRE. Multimeric assembly is essential for activity and may involve XPO1. Binds to human KPNB1, XPO1, TNPO1, RANBP5 and IPO7. Interacts with the viral Integrase. Interacts with human KHDRBS1. Interacts with human NAP1; this interaction decreases Rev multimerization and stimulates its activity. Interacts with human DEAD-box helicases DDX3 and DDX24; these interactions may serve for viral RNA export to the cytoplasm and packaging, respectively. Interacts with human PSIP1; this interaction may inhibit HIV-1 DNA integration by promoting dissociation of the Integrase-LEDGF/p75 complex. In terms of processing, asymmetrically arginine dimethylated at one site by host PRMT6. Methylation impairs the RNA-binding activity and export of viral RNA from the nucleus to the cytoplasm. Phosphorylated by protein kinase CK2. Presence of, and maybe binding to the N-terminus of the regulatory beta subunit of CK2 is necessary for CK2-mediated Rev's phosphorylation.

The protein resides in the host nucleus. The protein localises to the host nucleolus. It localises to the host cytoplasm. Escorts unspliced or incompletely spliced viral pre-mRNAs (late transcripts) out of the nucleus of infected cells. These pre-mRNAs carry a recognition sequence called Rev responsive element (RRE) located in the env gene, that is not present in fully spliced viral mRNAs (early transcripts). This function is essential since most viral proteins are translated from unspliced or partially spliced pre-mRNAs which cannot exit the nucleus by the pathway used by fully processed cellular mRNAs. Rev itself is translated from a fully spliced mRNA that readily exits the nucleus. Rev's nuclear localization signal (NLS) binds directly to KPNB1/Importin beta-1 without previous binding to KPNA1/Importin alpha-1. KPNB1 binds to the GDP bound form of RAN (Ran-GDP) and targets Rev to the nucleus. In the nucleus, the conversion from Ran-GDP to Ran-GTP dissociates Rev from KPNB1 and allows Rev's binding to the RRE in viral pre-mRNAs. Rev multimerization on the RRE via cooperative assembly exposes its nuclear export signal (NES) to the surface. Rev can then form a complex with XPO1/CRM1 and Ran-GTP, leading to nuclear export of the complex. Conversion from Ran-GTP to Ran-GDP mediates dissociation of the Rev/RRE/XPO1/RAN complex, so that Rev can return to the nucleus for a subsequent round of export. Beside KPNB1, also seems to interact with TNPO1/Transportin-1, RANBP5/IPO5 and IPO7/RANBP7 for nuclear import. The nucleoporin-like HRB/RIP is an essential cofactor that probably indirectly interacts with Rev to release HIV RNAs from the perinuclear region to the cytoplasm. The chain is Protein Rev from Human immunodeficiency virus type 1 group M subtype G (isolate 92NG083) (HIV-1).